Reading from the N-terminus, the 376-residue chain is Chlorophyll synthase, chloroplastic (376 aa).

The transit peptide at 1–47 (MATSHLLAAASSTAASSATFRPPLLSLRSPPPSSLRLNRRRHFQVVR) directs the protein to the chloroplast. The segment at 48–69 (AAETDKETKANAPEKAPAGGSS) is disordered. 8 helical membrane passes run 95–115 (PVTW…SGNF), 171–191 (VITQ…LLDV), 197–217 (FPII…YSAP), 230–250 (FALG…LFGT), 255–275 (IVVL…VNDF), 300–320 (WICV…LFSS), 325–345 (YALA…QYFL), and 355–375 (YQAS…LATS).

The protein belongs to the UbiA prenyltransferase family. Chlorophyll synthase subfamily.

The protein resides in the plastid. The protein localises to the chloroplast membrane. It catalyses the reaction phytyl diphosphate + chlorophyllide a + H(+) = chlorophyll a + diphosphate. In terms of biological role, involved in one of the last steps of the biosynthesis of chlorophyll a. This chain is Chlorophyll synthase, chloroplastic (CHLG), found in Oryza sativa subsp. japonica (Rice).